Here is a 177-residue protein sequence, read N- to C-terminus: MTAPTAPSMAAPPAPSMVSRMTALFLRVLTFAFLMVSLVIMTTNTGTIEIGIDEFKVRSKDFYSYRYMLAAIAFGLTYTILQIALTLNHISKRNGAQTSGDGNLVFDFYGDKVVSYILATGAAAAFGATKELKTQLAGLGGDKFFNKGYASASLLLLGFVCTAILSVFSSYALPKKV.

Residues 1–20 (MTAPTAPSMAAPPAPSMVSR) lie on the Cytoplasmic side of the membrane. A helical membrane pass occupies residues 21-41 (MTALFLRVLTFAFLMVSLVIM). The Extracellular portion of the chain corresponds to 42–66 (TTNTGTIEIGIDEFKVRSKDFYSYR). Residues 67–87 (YMLAAIAFGLTYTILQIALTL) traverse the membrane as a helical segment. The Cytoplasmic segment spans residues 88–107 (NHISKRNGAQTSGDGNLVFD). The chain crosses the membrane as a helical span at residues 108–128 (FYGDKVVSYILATGAAAAFGA). At 129–153 (TKELKTQLAGLGGDKFFNKGYASAS) the chain is on the extracellular side. Residues 154–174 (LLLLGFVCTAILSVFSSYALP) form a helical membrane-spanning segment. Residues 175-177 (KKV) are Cytoplasmic-facing.

This sequence belongs to the Casparian strip membrane proteins (CASP) family. In terms of assembly, homodimer and heterodimers.

It localises to the cell membrane. This chain is CASP-like protein 4D1, found in Populus trichocarpa (Western balsam poplar).